A 226-amino-acid chain; its full sequence is NAD(P)H-hydrate epimerase (226 aa).

In terms of domain architecture, YjeF N-terminal spans 10–215; the sequence is AIELDLDLFE…ALQRKYQLNL (206 aa). (6S)-NADPHX is bound at residue 58–62; the sequence is NNGGD. Positions 59 and 123 each coordinate K(+). Residues 127–133 and aspartate 156 contribute to the (6S)-NADPHX site; that span reads GFGFKPP. Residue serine 159 participates in K(+) binding.

Belongs to the NnrE/AIBP family. K(+) serves as cofactor.

The catalysed reaction is (6R)-NADHX = (6S)-NADHX. It catalyses the reaction (6R)-NADPHX = (6S)-NADPHX. Its function is as follows. Catalyzes the epimerization of the S- and R-forms of NAD(P)HX, a damaged form of NAD(P)H that is a result of enzymatic or heat-dependent hydration. This is a prerequisite for the S-specific NAD(P)H-hydrate dehydratase to allow the repair of both epimers of NAD(P)HX. The chain is NAD(P)H-hydrate epimerase from Drosophila pseudoobscura pseudoobscura (Fruit fly).